Here is a 274-residue protein sequence, read N- to C-terminus: Large ribosomal subunit protein uL2 (274 aa).

Residues 224-274 (VAMNPVDHPHGGGEGRTSGGRHPVTPWGIPTKGYKTRRNKRSNKLIVQKRK) form a disordered region. Over residues 257 to 274 (YKTRRNKRSNKLIVQKRK) the composition is skewed to basic residues.

It belongs to the universal ribosomal protein uL2 family. In terms of assembly, part of the 50S ribosomal subunit. Forms a bridge to the 30S subunit in the 70S ribosome.

Its function is as follows. One of the primary rRNA binding proteins. Required for association of the 30S and 50S subunits to form the 70S ribosome, for tRNA binding and peptide bond formation. It has been suggested to have peptidyltransferase activity; this is somewhat controversial. Makes several contacts with the 16S rRNA in the 70S ribosome. The polypeptide is Large ribosomal subunit protein uL2 (Francisella tularensis subsp. mediasiatica (strain FSC147)).